Consider the following 175-residue polypeptide: Sec-independent protein translocase protein TatB (175 aa).

The helical transmembrane segment at 1 to 21 (MLDLGLSKMALIGVVALVVLG) threads the bilayer. Disordered stretches follow at residues 96 to 115 (VSPG…AASG) and 153 to 175 (VQSG…ARFL). The segment covering 160–175 (VARHRPASLRRPARFL) has biased composition (basic residues).

This sequence belongs to the TatB family. In terms of assembly, the Tat system comprises two distinct complexes: a TatABC complex, containing multiple copies of TatA, TatB and TatC subunits, and a separate TatA complex, containing only TatA subunits. Substrates initially bind to the TatABC complex, which probably triggers association of the separate TatA complex to form the active translocon.

The protein resides in the cell inner membrane. Functionally, part of the twin-arginine translocation (Tat) system that transports large folded proteins containing a characteristic twin-arginine motif in their signal peptide across membranes. Together with TatC, TatB is part of a receptor directly interacting with Tat signal peptides. TatB may form an oligomeric binding site that transiently accommodates folded Tat precursor proteins before their translocation. This Burkholderia mallei (strain ATCC 23344) protein is Sec-independent protein translocase protein TatB.